The chain runs to 302 residues: Recombination-associated protein RdgC (302 aa).

This sequence belongs to the RdgC family.

The protein localises to the cytoplasm. It is found in the nucleoid. Its function is as follows. May be involved in recombination. The chain is Recombination-associated protein RdgC from Actinobacillus pleuropneumoniae serotype 5b (strain L20).